The chain runs to 364 residues: Probable dual-specificity RNA methyltransferase RlmN (364 aa).

The Proton acceptor role is filled by E107. One can recognise a Radical SAM core domain in the interval 113-346 (HDYGNSVCVT…ATIRREQGSD (234 aa)). A disulfide bond links C120 and C351. [4Fe-4S] cluster-binding residues include C127, C131, and C134. S-adenosyl-L-methionine-binding positions include 177 to 178 (GE), S209, 232 to 234 (SLH), and N308. The S-methylcysteine intermediate role is filled by C351.

The protein belongs to the radical SAM superfamily. RlmN family. It depends on [4Fe-4S] cluster as a cofactor.

It localises to the cytoplasm. It catalyses the reaction adenosine(2503) in 23S rRNA + 2 reduced [2Fe-2S]-[ferredoxin] + 2 S-adenosyl-L-methionine = 2-methyladenosine(2503) in 23S rRNA + 5'-deoxyadenosine + L-methionine + 2 oxidized [2Fe-2S]-[ferredoxin] + S-adenosyl-L-homocysteine. The enzyme catalyses adenosine(37) in tRNA + 2 reduced [2Fe-2S]-[ferredoxin] + 2 S-adenosyl-L-methionine = 2-methyladenosine(37) in tRNA + 5'-deoxyadenosine + L-methionine + 2 oxidized [2Fe-2S]-[ferredoxin] + S-adenosyl-L-homocysteine. Its function is as follows. Specifically methylates position 2 of adenine 2503 in 23S rRNA and position 2 of adenine 37 in tRNAs. Confers resistance to some classes of antibiotics. The chain is Probable dual-specificity RNA methyltransferase RlmN from Staphylococcus aureus (strain bovine RF122 / ET3-1).